A 270-amino-acid polypeptide reads, in one-letter code: Formamidopyrimidine-DNA glycosylase (270 aa).

The active-site Schiff-base intermediate with DNA is Pro2. Catalysis depends on Glu3, which acts as the Proton donor. Catalysis depends on Lys57, which acts as the Proton donor; for beta-elimination activity. The DNA site is built by His90, Arg109, and Lys150. An FPG-type zinc finger spans residues 235–269 (LVYGNKDKPCPRCGTKIKSIIIGQRNSFFCPQCQK). The active-site Proton donor; for delta-elimination activity is the Arg259.

It belongs to the FPG family. As to quaternary structure, monomer. Requires Zn(2+) as cofactor.

It catalyses the reaction Hydrolysis of DNA containing ring-opened 7-methylguanine residues, releasing 2,6-diamino-4-hydroxy-5-(N-methyl)formamidopyrimidine.. The enzyme catalyses 2'-deoxyribonucleotide-(2'-deoxyribose 5'-phosphate)-2'-deoxyribonucleotide-DNA = a 3'-end 2'-deoxyribonucleotide-(2,3-dehydro-2,3-deoxyribose 5'-phosphate)-DNA + a 5'-end 5'-phospho-2'-deoxyribonucleoside-DNA + H(+). Functionally, involved in base excision repair of DNA damaged by oxidation or by mutagenic agents. Acts as a DNA glycosylase that recognizes and removes damaged bases. Has a preference for oxidized purines, such as 7,8-dihydro-8-oxoguanine (8-oxoG). Has AP (apurinic/apyrimidinic) lyase activity and introduces nicks in the DNA strand. Cleaves the DNA backbone by beta-delta elimination to generate a single-strand break at the site of the removed base with both 3'- and 5'-phosphates. The protein is Formamidopyrimidine-DNA glycosylase of Histophilus somni (strain 129Pt) (Haemophilus somnus).